We begin with the raw amino-acid sequence, 521 residues long: 2,3-bisphosphoglycerate-independent phosphoglycerate mutase 2 (521 aa).

The Mn(2+) site is built by Asp20 and Ser70. Ser70 serves as the catalytic Phosphoserine intermediate. Substrate is bound by residues His131, 161–162 (RD), Arg193, Arg199, 270–273 (RPDR), and Lys343. Mn(2+) contacts are provided by Asp410, His414, Asp451, His452, and His470.

Belongs to the BPG-independent phosphoglycerate mutase family. The cofactor is Mn(2+).

It catalyses the reaction (2R)-2-phosphoglycerate = (2R)-3-phosphoglycerate. The protein operates within carbohydrate degradation; glycolysis; pyruvate from D-glyceraldehyde 3-phosphate: step 3/5. Catalyzes the interconversion of 2-phosphoglycerate and 3-phosphoglycerate. This is 2,3-bisphosphoglycerate-independent phosphoglycerate mutase 2 from Methanosarcina acetivorans (strain ATCC 35395 / DSM 2834 / JCM 12185 / C2A).